Reading from the N-terminus, the 211-residue chain is MFTYYFQGLALGAAMILPLGPQNAFVMNQGIRRQYHLMIALLCAVSDLLLICAGIFGGSALLMQSPWLLALVTWGGVAFLLCYGFGALKTAFSQSLELANAEVMQQGRWKIIITMLAVTWLNPHVYLDTFVVLGSLGGQLAVEPKRWFALGTISASFLWFFGLALLAAWLAPRLRTARAQRIINIVVGAVMWFIAFQLAREGVSHIQALLN.

A run of 6 helical transmembrane segments spans residues Met1–Pro21, Leu37–Gly57, Leu68–Leu88, Ile111–Val131, Trp147–Ala167, and Ala179–Ala199.

Belongs to the LysE/ArgO transporter (TC 2.A.75) family.

It localises to the cell inner membrane. It catalyses the reaction L-arginine(in) = L-arginine(out). In terms of biological role, involved in the export of arginine. Important to control the intracellular level of arginine and the correct balance between arginine and lysine. This is Arginine exporter protein ArgO from Klebsiella pneumoniae subsp. pneumoniae (strain ATCC 700721 / MGH 78578).